The primary structure comprises 115 residues: DNA-binding protein TV0008 (115 aa).

A disordered region spans residues Leu-18–Ile-37.

This sequence belongs to the PDCD5 family.

This is DNA-binding protein TV0008 from Thermoplasma volcanium (strain ATCC 51530 / DSM 4299 / JCM 9571 / NBRC 15438 / GSS1).